A 288-amino-acid polypeptide reads, in one-letter code: Protein CREG2 (288 aa).

Residues Met1–Gly31 form the signal peptide. Residues Ala78–Arg100 are disordered. N-linked (GlcNAc...) asparagine glycosylation occurs at Asn164.

This sequence belongs to the CREG family. As to expression, brain specific.

The protein resides in the secreted. The polypeptide is Protein CREG2 (Creg2) (Mus musculus (Mouse)).